The sequence spans 158 residues: MEPSEGASPGGLVKEVDMPQAALSAPVPVTGTSGQSPMAEEELGIPIPAPGLLQVTERRQPLSSVSSLEVHFDLLDLTELTDMSDQELAEVFADSDDENVASDSHAGLHPLPRAGCLRSPSWTRTRAEQNREKQPFGDPERQPAIVDTILTVERPKED.

The disordered stretch occupies residues 1-38 (MEPSEGASPGGLVKEVDMPQAALSAPVPVTGTSGQSPM). Ser95 and Ser119 each carry phosphoserine. The tract at residues 96–158 (DDENVASDSH…ILTVERPKED (63 aa)) is disordered. Over residues 125–141 (TRAEQNREKQPFGDPER) the composition is skewed to basic and acidic residues.

This sequence belongs to the dysbindin family.

The protein is Dysbindin domain-containing protein 1 (DBNDD1) of Bos taurus (Bovine).